The sequence spans 729 residues: Probable pre-mRNA-splicing factor ATP-dependent RNA helicase DEAH3 (729 aa).

The region spanning 75–244 is the Helicase ATP-binding domain; it reads LNTLNSNQTL…FSGAPLMKVP (170 aa). 88 to 95 is a binding site for ATP; sequence GETGSGKT. A DEAH box motif is present at residues 191–194; sequence DEAH. Residues 269-449 form the Helicase C-terminal domain; sequence TVVQIHMCEP…NTVLTLKKLG (181 aa).

Belongs to the DEAD box helicase family. DEAH subfamily. PRP43 sub-subfamily.

The catalysed reaction is ATP + H2O = ADP + phosphate + H(+). May be involved in pre-mRNA splicing. The chain is Probable pre-mRNA-splicing factor ATP-dependent RNA helicase DEAH3 from Arabidopsis thaliana (Mouse-ear cress).